Reading from the N-terminus, the 227-residue chain is Casparian strip membrane protein 2 (227 aa).

At 1-59 (MSSTSEATVIHMDGAAGKTPATAVPPPPPPAPTAPVQQQRKAGGVPFLLRSGAEGFRRC) the chain is on the cytoplasmic side. Residues 17 to 37 (GKTPATAVPPPPPPAPTAPVQ) are disordered. Residues 23 to 33 (AVPPPPPPAPT) are compositionally biased toward pro residues. A helical transmembrane segment spans residues 60-80 (MALLDLLLRVAAMGPTLAAAI). The Extracellular segment spans residues 81 to 107 (STGTSDETLSVFTHYFQFRARFDDFSA). The chain crosses the membrane as a helical span at residues 108-128 (FTFFMVANAVAAGYLLMSLPF). The Cytoplasmic portion of the chain corresponds to 129-149 (SAFGVIRPKATSVRLLLLICD). Residues 150-170 (TIMVVLVTAAASAAAAIVYVA) traverse the membrane as a helical segment. Residues 171–197 (HEGNRRANWVPICMQFHGFCKRTSGAV) lie on the Extracellular side of the membrane. Residues 198–218 (VASFLAVLIFILLVFLGACAI) traverse the membrane as a helical segment. Over 219 to 227 (RRRHTTTKH) the chain is Cytoplasmic.

It belongs to the Casparian strip membrane proteins (CASP) family. In terms of assembly, homodimer and heterodimers.

It localises to the cell membrane. Its function is as follows. Regulates membrane-cell wall junctions and localized cell wall deposition. Required for establishment of the Casparian strip membrane domain (CSD) and the subsequent formation of Casparian strips, a cell wall modification of the root endodermis that determines an apoplastic barrier between the intraorganismal apoplasm and the extraorganismal apoplasm and prevents lateral diffusion. This is Casparian strip membrane protein 2 from Brachypodium distachyon (Purple false brome).